A 550-amino-acid polypeptide reads, in one-letter code: CCR4-NOT transcription complex subunit 6-like-A (550 aa).

The required for interaction with cnot1, cnot3 and cnot7 stretch occupies residues 1 to 148 (MPKEKYDPPD…LYQEPDGMRK (148 aa)). LRR repeat units follow at residues 52-73 (HLTV…IAKL), 75-96 (NLVY…LGNV), 98-120 (SLRE…GRLF), and 121-143 (RLQT…YQEP). The nuclease domain stretch occupies residues 153–550 (MLDNLSVHPE…INGVHLPSRR (398 aa)). Glutamate 235 contacts Mg(2+). The substrate site is built by glutamate 235, glutamate 271, histidine 355, and proline 360. Aspartate 405 is a Mg(2+) binding site. Aspartate 405 serves as the catalytic Proton donor/acceptor. Substrate-binding residues include asparagine 407, asparagine 474, and phenylalanine 479.

It belongs to the CCR4/nocturin family. In terms of assembly, component of the CCR4-NOT complex. Mg(2+) is required as a cofactor.

It is found in the cytoplasm. The protein localises to the nucleus. The enzyme catalyses Exonucleolytic cleavage of poly(A) to 5'-AMP.. Its function is as follows. Poly(A) nuclease with 3'-5' RNase activity. Catalytic component of the CCR4-NOT complex which is one of the major cellular mRNA deadenylases and is linked to various cellular processes including bulk mRNA degradation, miRNA-mediated repression, translational repression during translational initiation and general transcription regulation. Additional complex functions may be a consequence of its influence on mRNA expression. This chain is CCR4-NOT transcription complex subunit 6-like-A (cnot6l-a), found in Xenopus laevis (African clawed frog).